Reading from the N-terminus, the 372-residue chain is B2 bradykinin receptor (372 aa).

Topologically, residues M1 to Q34 are extracellular. 2 N-linked (GlcNAc...) asparagine glycosylation sites follow: N3 and N12. Residues A35–L58 traverse the membrane as a helical segment. Residues H59–E67 lie on the Cytoplasmic side of the membrane. Residues I68–A92 form a helical membrane-spanning segment. The Extracellular segment spans residues N93–R105. Residues C104 and C185 are joined by a disulfide bond. Residues M106–I127 form a helical membrane-spanning segment. Topologically, residues D128–K149 are cytoplasmic. Residue Y130 is modified to Phosphotyrosine. Residues L150–M172 form a helical membrane-spanning segment. Residues K173–Q195 lie on the Extracellular side of the membrane. An N-linked (GlcNAc...) asparagine glycan is attached at N181. Residues V196 to M222 form a helical membrane-spanning segment. Over Q223–R241 the chain is Cytoplasmic. A helical membrane pass occupies residues A242–L266. Residues D267 to D284 lie on the Extracellular side of the membrane. The helical transmembrane segment at L285–V308 threads the bilayer. Topologically, residues G309–S364 are cytoplasmic. At Y320 the chain carries Phosphotyrosine. The S-palmitoyl cysteine moiety is linked to residue C324. Residue S339 is modified to Phosphoserine. Position 342 is a phosphothreonine (T342). S346 and S348 each carry phosphoserine; by GRK6.

It belongs to the G-protein coupled receptor 1 family. Bradykinin receptor subfamily. BDKRB2 sub-subfamily. Forms a complex with PECAM1 and GNAQ. Interacts with PECAM1.

The protein resides in the cell membrane. In terms of biological role, receptor for bradykinin. It is associated with G proteins that activate a phosphatidylinositol-calcium second messenger system. The sequence is that of B2 bradykinin receptor (BDKRB2) from Cavia porcellus (Guinea pig).